A 246-amino-acid chain; its full sequence is Transcription factor MYB113 (246 aa).

2 consecutive HTH myb-type domains span residues 5 to 61 (PKGL…KPSI) and 62 to 112 (KRGK…SKKH). 2 DNA-binding regions (H-T-H motif) span residues 33–57 (WHRVPLRTGLNRCRKSCRLRWLNYL) and 85–108 (WSLIAGRLPGRTANDVKNYWNTHL).

As to quaternary structure, interacts with BHLH002/EGL3/MYC146, BHLH012/MYC1 and BHLH042/TT8.

It localises to the nucleus. Transcription activator, when associated with BHLH002/EGL3/MYC146, BHLH012/MYC1, or BHLH042/TT8. This Arabidopsis thaliana (Mouse-ear cress) protein is Transcription factor MYB113 (MYB113).